The chain runs to 32 residues: U21-ctenitoxin-Co1a (32 aa).

Intrachain disulfides connect cysteine 3/cysteine 17, cysteine 10/cysteine 21, and cysteine 16/cysteine 30.

In terms of tissue distribution, expressed by the venom gland.

The protein localises to the secreted. Not toxic to mice by intracerebroventricular injection. This is U21-ctenitoxin-Co1a from Ctenus ornatus (Brazilian spider).